The following is a 264-amino-acid chain: Thymidylate synthase (264 aa).

Residue R21 participates in dUMP binding. A (6R)-5,10-methylene-5,6,7,8-tetrahydrofolate-binding site is contributed by H51. 126–127 (RR) provides a ligand contact to dUMP. Catalysis depends on C146, which acts as the Nucleophile. DUMP-binding positions include 166–169 (RSAD), N177, and 207–209 (HLY). (6R)-5,10-methylene-5,6,7,8-tetrahydrofolate is bound at residue D169. S263 lines the (6R)-5,10-methylene-5,6,7,8-tetrahydrofolate pocket.

It belongs to the thymidylate synthase family. Bacterial-type ThyA subfamily. In terms of assembly, homodimer.

The protein localises to the cytoplasm. The catalysed reaction is dUMP + (6R)-5,10-methylene-5,6,7,8-tetrahydrofolate = 7,8-dihydrofolate + dTMP. It functions in the pathway pyrimidine metabolism; dTTP biosynthesis. Functionally, catalyzes the reductive methylation of 2'-deoxyuridine-5'-monophosphate (dUMP) to 2'-deoxythymidine-5'-monophosphate (dTMP) while utilizing 5,10-methylenetetrahydrofolate (mTHF) as the methyl donor and reductant in the reaction, yielding dihydrofolate (DHF) as a by-product. This enzymatic reaction provides an intracellular de novo source of dTMP, an essential precursor for DNA biosynthesis. The protein is Thymidylate synthase of Neisseria meningitidis serogroup C / serotype 2a (strain ATCC 700532 / DSM 15464 / FAM18).